A 219-amino-acid polypeptide reads, in one-letter code: Virginiamycin A acetyltransferase (219 aa).

His87 is an active-site residue.

It belongs to the transferase hexapeptide repeat family.

Functionally, inactivates the A compounds of virginiamycin-like antibiotics, thus providing resistance to these antibiotics. The polypeptide is Virginiamycin A acetyltransferase (vat) (Staphylococcus aureus).